The chain runs to 338 residues: Lipoate-protein ligase A (338 aa).

The BPL/LPL catalytic domain occupies 29–216 (PATQRVLFLW…AFFAHYGERV (188 aa)). Residues Arg-71, 76–79 (GAVF), and Lys-134 each bind ATP. Lys-134 is a (R)-lipoate binding site.

Belongs to the LplA family. Monomer.

It localises to the cytoplasm. The enzyme catalyses L-lysyl-[lipoyl-carrier protein] + (R)-lipoate + ATP = N(6)-[(R)-lipoyl]-L-lysyl-[lipoyl-carrier protein] + AMP + diphosphate + H(+). It participates in protein modification; protein lipoylation via exogenous pathway; protein N(6)-(lipoyl)lysine from lipoate: step 1/2. The protein operates within protein modification; protein lipoylation via exogenous pathway; protein N(6)-(lipoyl)lysine from lipoate: step 2/2. Its function is as follows. Catalyzes both the ATP-dependent activation of exogenously supplied lipoate to lipoyl-AMP and the transfer of the activated lipoyl onto the lipoyl domains of lipoate-dependent enzymes. This Salmonella paratyphi B (strain ATCC BAA-1250 / SPB7) protein is Lipoate-protein ligase A.